An 874-amino-acid polypeptide reads, in one-letter code: MKSAEIREAFLRFFEEQGHTRVASSSLIPGNDPTLLFTNAGMNQFKDCFLGQEKRAYTRAVSSQKCVRAGGKHNDLENVGYTARHHTFFEMLGNFSFGDYFKRDAITYAWNFLTSEKWLNLPKEKLWVTVYASDDEAYDIWTKEVGVPAERMVRIGDNKGAPYASDNFWTMGDTGPCGPCTEIFYDHGADIWGGPPGSPEEDGDRYIEIWNNVFMQFNRTADGVLHPLPAPSVDTGMGLERISAVLQHVHSNYEIDLFQSLLAASAKAIGCTNDAQASLKVVADHIRSCGFLIADGVLPSNEGRGYVLRRIIRRACRHGNKLGAKGSFFYLIVAALVAEMGEAFPELKSQQAHIERVLKAEEEQFAKTLEQGLKILEQDLAELKGDVVPGDVVFKLYDTYGFPMDLTADIARERSLTIDEAGFEREMEAQRVRARSASSFGLDYNSLVKVDVDTEFTGYHATSGSAKVVALYKDGQSVDVLSEGQEGVVVLNQTPFYAESGGQVGDCGYLQAGNSRFDVRDTTKTGGAFLHHGVLASGSLIVGAPVETHVEADVRHATSLNHSATHLLHAALRKVLGDHVQQKGSLVDSQRLRFDFSHFEAIKPEQIKALEDIVNAEIRKNSAVETEETDIETAKQKGAMALFGEKYGDNVRVLSMGGDFSVELCGGIHANRTGDIGLLKIISEGGVASGVRRIEAVTGAAALAYLNAAEEQLKEAASLVKGSRDNLIDKLSAVLERNRALEKQLEQLQAKAAAAAGDDLSASAVDVKGVKVLAVRLDGQDGKALLALVDQLKNKLGRAVILLGSVHEEKVVLVAGVTKDLTGQLKAGDLMKQAAAAVGGKGGGRPDMAQGGGVDAGALDGALALTVPFVEQGL.

Zn(2+)-binding residues include His562, His566, Cys665, and His669.

Belongs to the class-II aminoacyl-tRNA synthetase family. Zn(2+) serves as cofactor.

The protein localises to the cytoplasm. It catalyses the reaction tRNA(Ala) + L-alanine + ATP = L-alanyl-tRNA(Ala) + AMP + diphosphate. Catalyzes the attachment of alanine to tRNA(Ala) in a two-step reaction: alanine is first activated by ATP to form Ala-AMP and then transferred to the acceptor end of tRNA(Ala). Also edits incorrectly charged Ser-tRNA(Ala) and Gly-tRNA(Ala) via its editing domain. The polypeptide is Alanine--tRNA ligase (Pseudomonas fluorescens (strain Pf0-1)).